The chain runs to 240 residues: Ribonuclease HII (240 aa).

The RNase H type-2 domain occupies 31–222 (RLIAGVDEAG…VRRALGLETA (192 aa)). A divalent metal cation contacts are provided by D37, E38, and D130.

This sequence belongs to the RNase HII family. It depends on Mn(2+) as a cofactor. The cofactor is Mg(2+).

Its subcellular location is the cytoplasm. It catalyses the reaction Endonucleolytic cleavage to 5'-phosphomonoester.. Endonuclease that specifically degrades the RNA of RNA-DNA hybrids. The sequence is that of Ribonuclease HII from Xanthomonas campestris pv. campestris (strain B100).